Here is a 154-residue protein sequence, read N- to C-terminus: Transcriptional repressor NrdR (154 aa).

A zinc finger lies at 3–34 (CPFCGANDTKVIDSRLVAEGEQVRRRRECVAC). The region spanning 49-139 (PRLIKQDGTR…VYRRFQDLDE (91 aa)) is the ATP-cone domain.

It belongs to the NrdR family. Zn(2+) is required as a cofactor.

Negatively regulates transcription of bacterial ribonucleotide reductase nrd genes and operons by binding to NrdR-boxes. The chain is Transcriptional repressor NrdR from Pseudomonas entomophila (strain L48).